Reading from the N-terminus, the 522-residue chain is Cytochrome b mRNA maturase bI3 (522 aa).

At 1 to 31 the chain is on the mitochondrial matrix side; it reads MTIRKSNPYLSLVNSYLMDSPQPSSMNYWWN. Residues 1 to 163 are cytochrome b; that stretch reads MTIRKSNPYL…MPFMGGDLVP (163 aa). Residues 32–52 traverse the membrane as a helical segment; it reads VGSLLGLCLVMQMASGMFLAM. The Mitochondrial intermembrane segment spans residues 53–84; that stretch reads HYSSSMELAFNSVEHMMRDVNAGWLMRYIHAN. The chain crosses the membrane as a helical span at residues 85 to 105; sequence GASFFFMCLYLHMGKALYYGS. Residues 106–110 lie on the Mitochondrial matrix side of the membrane; that stretch reads YKSPR. The chain crosses the membrane as a helical span at residues 111–131; that stretch reads VLVWSMGVMMFMLTMATAFMG. Residues 132–154 lie on the Mitochondrial intermembrane side of the membrane; the sequence is YCLVYGQMSHWGATVITNLLSAM. The helical transmembrane segment at 155–175 threads the bilayer; sequence PFMGGDLVPLSIILSLYLLYI. Residues 164–522 form a maturase region; it reads LSIILSLYLL…PYMSWHQKEQ (359 aa). The Mitochondrial matrix portion of the chain corresponds to 176–522; the sequence is SLKTFMKMIF…PYMSWHQKEQ (347 aa).

In the N-terminal section; belongs to the cytochrome b family. The protein in the C-terminal section; belongs to the LAGLIDADG endonuclease family.

It localises to the mitochondrion inner membrane. Its function is as follows. Mitochondrial mRNA maturase required for splicing of intron 3 of the cytochrome b (COB) gene, containing its own coding sequence. The polypeptide is Cytochrome b mRNA maturase bI3 (bI3) (Debaryomyces hansenii (strain ATCC 36239 / CBS 767 / BCRC 21394 / JCM 1990 / NBRC 0083 / IGC 2968) (Yeast)).